The chain runs to 2147 residues: Probable serine/threonine-protein kinase roco6 (2147 aa).

The Extracellular portion of the chain corresponds to 1–1055 (MNSIHKQHYT…LDHSRVEFNR (1055 aa)). LRR repeat units follow at residues 69 to 89 (DMKY…MMIP), 101 to 122 (SISI…LKQL), 124 to 145 (QLIS…FPEE), 148 to 169 (LLRK…FNKF), 171 to 192 (ILED…LFPE), 193 to 214 (GIMR…PWFE), 215 to 236 (SLLT…PFHL), 237 to 256 (VRVS…VILR), 306 to 328 (HLTH…ANLT), 329 to 350 (ELVR…IVSY), and 352 to 372 (RLEH…PRRI). The region spanning 390-750 (QGEPSYRVKL…DLLKKTVVEL (361 aa)) is the Roc domain. A small GTPase-like region spans residues 390–750 (QGEPSYRVKL…DLLKKTVVEL (361 aa)). 403–410 (GQENVGKT) contacts GTP. 2 disordered regions span residues 491–582 (NSNG…VGTN) and 602–621 (SNLS…GGSG). Composition is skewed to low complexity over residues 492-512 (SNGV…NIHS), 519-531 (NVNS…SNNS), 539-568 (NSFL…NVNS), and 602-617 (SNLS…NNNS). Residues 634–638 (DCAGQ) and 691–694 (THLD) contribute to the GTP site. In terms of domain architecture, COR spans 758–892 (PELYLKLEKL…RFELMFPLDS (135 aa)). 2 stretches are compositionally biased toward low complexity: residues 905–941 (GNSY…SPST) and 960–977 (SGNN…RSIS). The interval 905-995 (GNSYVNNNNN…NSDLDLIGGG (91 aa)) is disordered. The stretch at 1051-1098 (VEFNRWIQLSFAPAGLFSRLLIRLLISKEFDMKPILYWRNGVVVESQS) is one WD 1 repeat. Residues 1056 to 1076 (WIQLSFAPAGLFSRLLIRLLI) traverse the membrane as a helical segment. Over 1077-2147 (SKEFDMKPIL…CGTNNVCIWS (1071 aa)) the chain is Cytoplasmic. LRR repeat units follow at residues 1237 to 1263 (ILSI…PPPP), 1274 to 1297 (DDNI…GSQP), and 1325 to 1348 (ESSL…TYKY). The 272-residue stretch at 1356–1627 (FESPKLIGRG…KIVKRIKQII (272 aa)) folds into the Protein kinase domain. ATP-binding positions include 1362–1370 (IGRGASGKI) and Lys1383. The active-site Proton acceptor is the Asp1481. Residues 1653 to 1699 (ADSQPFHYHQQQQPSLNSTNQLQQQQYSSVLTSPRSNLSDSSNSSQN) are disordered. The segment covering 1662–1699 (QQQQPSLNSTNQLQQQQYSSVLTSPRSNLSDSSNSSQN) has biased composition (low complexity). WD repeat units lie at residues 1735 to 1774 (QPEA…QIFR) and 1778 to 1820 (LHPG…LDDQ). Residues 1821 to 1923 (SGTKSDFITK…WLTAINRVIN (103 aa)) enclose the PH domain. A WD 4 repeat occupies 2031–2068 (HYSKPITSMALVEKNVWISCEDESLSVWDGDTGSFIRK).

It belongs to the protein kinase superfamily. TKL Ser/Thr protein kinase family. ROCO subfamily.

The protein resides in the membrane. The enzyme catalyses L-seryl-[protein] + ATP = O-phospho-L-seryl-[protein] + ADP + H(+). The catalysed reaction is L-threonyl-[protein] + ATP = O-phospho-L-threonyl-[protein] + ADP + H(+). Functionally, may act as a serine/threonine-protein kinase and guanine-nucleotide releasing factor. The sequence is that of Probable serine/threonine-protein kinase roco6 (roco6) from Dictyostelium discoideum (Social amoeba).